The sequence spans 464 residues: L-cysteine:1D-myo-inositol 2-amino-2-deoxy-alpha-D-glucopyranoside ligase (464 aa).

Cys67 provides a ligand contact to Zn(2+). L-cysteinyl-5'-AMP-binding positions include 67–70 (CGIT), Thr82, and 105–107 (NVT). The short motif at 69–79 (ITPYDATHLGH) is the 'HIGH' region element. Residues 207–212 (ERGGDP) carry the 'ERGGDP' region motif. Position 247 (Trp247) interacts with L-cysteinyl-5'-AMP. Cys251 contacts Zn(2+). 269–271 (GTD) contributes to the L-cysteinyl-5'-AMP binding site. His276 is a Zn(2+) binding site. L-cysteinyl-5'-AMP is bound at residue Val303. Residues 309-313 (KMSKS) carry the 'KMSKS' region motif. Positions 410-435 (AGGSAGAGPDPTHQGGPVRGSGGDVP) are disordered.

Belongs to the class-I aminoacyl-tRNA synthetase family. MshC subfamily. In terms of assembly, monomer. Requires Zn(2+) as cofactor.

It carries out the reaction 1D-myo-inositol 2-amino-2-deoxy-alpha-D-glucopyranoside + L-cysteine + ATP = 1D-myo-inositol 2-(L-cysteinylamino)-2-deoxy-alpha-D-glucopyranoside + AMP + diphosphate + H(+). In terms of biological role, catalyzes the ATP-dependent condensation of GlcN-Ins and L-cysteine to form L-Cys-GlcN-Ins. This Frankia casuarinae (strain DSM 45818 / CECT 9043 / HFP020203 / CcI3) protein is L-cysteine:1D-myo-inositol 2-amino-2-deoxy-alpha-D-glucopyranoside ligase.